Reading from the N-terminus, the 805-residue chain is Arginine/serine-rich protein PNISR (805 aa).

Residues 75–88 (NNHGNFQGDSNFNR) show a composition bias toward polar residues. Disordered regions lie at residues 75-331 (NNHG…EEKE) and 382-805 (LTGL…SRSR). Composition is skewed to pro residues over residues 100 to 115 (PPHP…PAPG) and 183 to 194 (YWQPGPPGPPAP). Residues 197-210 (NRRERPPSFRDRQR) show a composition bias toward basic and acidic residues. Residues serine 204 and serine 211 each carry the phosphoserine modification. Residue lysine 218 forms a Glycyl lysine isopeptide (Lys-Gly) (interchain with G-Cter in SUMO2) linkage. Positions 237–276 (REGLEKMEREKQKKLEKERMEQQRSQLSKKEKKATEDAEG) form a coiled coil. The span at 238-258 (EGLEKMEREKQKKLEKERMEQ) shows a compositional bias: basic and acidic residues. A phosphoserine mark is found at serine 290, serine 304, serine 313, and serine 321. Residues 290-299 (SDEEDEDAEN) show a composition bias toward acidic residues. The span at 384–393 (GLGGLGGYGS) shows a compositional bias: gly residues. A compositionally biased stretch (basic and acidic residues) spans 421–463 (QKQEAFWRKEKEQQLLQDKQIEEEKQQTERVTKEMNEFIHREQ). Residues 427 to 461 (WRKEKEQQLLQDKQIEEEKQQTERVTKEMNEFIHR) adopt a coiled-coil conformation. Phosphoserine occurs at positions 465 and 467. Composition is skewed to basic and acidic residues over residues 473 to 486 (EADR…KRTP) and 494 to 508 (EPKR…ERGS). Residue threonine 485 is modified to Phosphothreonine. Lysine 496 is covalently cross-linked (Glycyl lysine isopeptide (Lys-Gly) (interchain with G-Cter in SUMO2)). The span at 509–550 (RSGSSSSGSSSSGSRTSSSSSSVSSSSYSSSSGSSCTSSRSS) shows a compositional bias: low complexity. 4 stretches are compositionally biased toward basic residues: residues 551 to 560 (SPKRRKRPSR), 567 to 579 (KARR…YSRR), 587 to 598 (TRGKLRDRRRSN), and 607 to 639 (RRNR…SRDR). A compositionally biased stretch (basic and acidic residues) spans 659–721 (EAKEQDRKKE…KRKRESERTF (63 aa)). Lysine 703 is covalently cross-linked (Glycyl lysine isopeptide (Lys-Gly) (interchain with G-Cter in SUMO2)). Serine 726 is modified (phosphoserine). Residues 732–753 (IRHDSRQDSKKNATKDSKRHSG) show a composition bias toward basic and acidic residues. Positions 754 to 767 (SDSSGRSSSESPGS) are enriched in low complexity. Basic residues-rich tracts occupy residues 771 to 781 (KKAKKPKHSRS) and 789 to 805 (RSGK…SRSR).

The protein belongs to the splicing factor SR family. As to quaternary structure, interacts with PNN.

It is found in the nucleus speckle. The protein is Arginine/serine-rich protein PNISR (Pnisr) of Mus musculus (Mouse).